The chain runs to 74 residues: Cytochrome c oxidase assembly factor 5 (74 aa).

The 39-residue stretch at Gln27–Arg65 folds into the CHCH domain. Residues Cys30 to Cys41 carry the Cx10C motif motif. 2 disulfide bridges follow: Cys30–Cys57 and Cys41–Cys47. At Ser37 the chain carries Phosphoserine. The Cx9C motif signature appears at Cys47–Cys57.

This sequence belongs to the PET191 family.

Its function is as follows. Involved in an early step of the mitochondrial complex IV assembly process. The polypeptide is Cytochrome c oxidase assembly factor 5 (COA5) (Bos taurus (Bovine)).